Reading from the N-terminus, the 424-residue chain is GTPase Obg (424 aa).

The Obg domain occupies 1–159 (MVFIDTARIY…MWVRLELKLL (159 aa)). Residues 160–330 (ADVGLVGFPN…LLDKTIEILS (171 aa)) enclose the OBG-type G domain. GTP contacts are provided by residues 166–173 (GFPNAGKS), 191–195 (FTTLT), 212–215 (DIPG), 282–285 (NKMD), and 311–313 (SAL). Ser173 and Thr193 together coordinate Mg(2+). Residues 347-424 (NPPEEEETLE…VRDFEFEYYE (78 aa)) form the OCT domain.

The protein belongs to the TRAFAC class OBG-HflX-like GTPase superfamily. OBG GTPase family. Monomer. The cofactor is Mg(2+).

Its subcellular location is the cytoplasm. Its function is as follows. An essential GTPase which binds GTP, GDP and possibly (p)ppGpp with moderate affinity, with high nucleotide exchange rates and a fairly low GTP hydrolysis rate. Plays a role in control of the cell cycle, stress response, ribosome biogenesis and in those bacteria that undergo differentiation, in morphogenesis control. This is GTPase Obg from Caldanaerobacter subterraneus subsp. tengcongensis (strain DSM 15242 / JCM 11007 / NBRC 100824 / MB4) (Thermoanaerobacter tengcongensis).